We begin with the raw amino-acid sequence, 111 residues long: Gene 81 protein (111 aa).

This Mycobacterium (Mycobacteriophage L5) protein is Gene 81 protein (81).